Consider the following 159-residue polypeptide: Crossover junction endodeoxyribonuclease RuvC (159 aa).

Residues aspartate 7, glutamate 66, and aspartate 139 contribute to the active site. Aspartate 7, glutamate 66, and aspartate 139 together coordinate Mg(2+).

It belongs to the RuvC family. Homodimer which binds Holliday junction (HJ) DNA. The HJ becomes 2-fold symmetrical on binding to RuvC with unstacked arms; it has a different conformation from HJ DNA in complex with RuvA. In the full resolvosome a probable DNA-RuvA(4)-RuvB(12)-RuvC(2) complex forms which resolves the HJ. Requires Mg(2+) as cofactor.

It localises to the cytoplasm. The catalysed reaction is Endonucleolytic cleavage at a junction such as a reciprocal single-stranded crossover between two homologous DNA duplexes (Holliday junction).. The RuvA-RuvB-RuvC complex processes Holliday junction (HJ) DNA during genetic recombination and DNA repair. Endonuclease that resolves HJ intermediates. Cleaves cruciform DNA by making single-stranded nicks across the HJ at symmetrical positions within the homologous arms, yielding a 5'-phosphate and a 3'-hydroxyl group; requires a central core of homology in the junction. The consensus cleavage sequence is 5'-(A/T)TT(C/G)-3'. Cleavage occurs on the 3'-side of the TT dinucleotide at the point of strand exchange. HJ branch migration catalyzed by RuvA-RuvB allows RuvC to scan DNA until it finds its consensus sequence, where it cleaves and resolves the cruciform DNA. This is Crossover junction endodeoxyribonuclease RuvC from Sulfurovum sp. (strain NBC37-1).